Consider the following 732-residue polypeptide: DNA-directed RNA polymerase subunit beta' (732 aa).

Zn(2+) contacts are provided by cysteine 70, cysteine 72, cysteine 85, and cysteine 88. Residues aspartate 575, aspartate 577, and aspartate 579 each coordinate Mg(2+).

The protein belongs to the RNA polymerase beta' chain family. RpoC1 subfamily. As to quaternary structure, in plastids the minimal PEP RNA polymerase catalytic core is composed of four subunits: alpha, beta, beta', and beta''. When a (nuclear-encoded) sigma factor is associated with the core the holoenzyme is formed, which can initiate transcription. Requires Mg(2+) as cofactor. Zn(2+) is required as a cofactor.

The protein resides in the plastid. It localises to the chloroplast. The enzyme catalyses RNA(n) + a ribonucleoside 5'-triphosphate = RNA(n+1) + diphosphate. Functionally, DNA-dependent RNA polymerase catalyzes the transcription of DNA into RNA using the four ribonucleoside triphosphates as substrates. This Thalassiosira pseudonana (Marine diatom) protein is DNA-directed RNA polymerase subunit beta'.